The following is a 106-amino-acid chain: uncharacterized protein (106 aa).

The Cytoplasmic portion of the chain corresponds to 1–6 (MYQTSP). Residues 7–27 (LSLFYFQVLVPKFLECFLCFP) form a helical membrane-spanning segment. At 28–32 (YHKIS) the chain is on the extracellular side. The chain crosses the membrane as a helical span at residues 33 to 53 (LVALLSFFYCQLQTNMIILLS). The Cytoplasmic portion of the chain corresponds to 54-73 (QIKRFLYRQIMIALKIKAKK). A helical transmembrane segment spans residues 74–94 (FWFIFKYFNVSCDARLFNELF). Topologically, residues 95 to 106 (YIFQTYVSVDSK) are extracellular.

The protein resides in the membrane. This is an uncharacterized protein from Saccharomyces cerevisiae (strain ATCC 204508 / S288c) (Baker's yeast).